The chain runs to 262 residues: Indole-3-glycerol phosphate synthase (262 aa).

This sequence belongs to the TrpC family.

It carries out the reaction 1-(2-carboxyphenylamino)-1-deoxy-D-ribulose 5-phosphate + H(+) = (1S,2R)-1-C-(indol-3-yl)glycerol 3-phosphate + CO2 + H2O. The protein operates within amino-acid biosynthesis; L-tryptophan biosynthesis; L-tryptophan from chorismate: step 4/5. This chain is Indole-3-glycerol phosphate synthase, found in Bordetella bronchiseptica (strain ATCC BAA-588 / NCTC 13252 / RB50) (Alcaligenes bronchisepticus).